A 513-amino-acid polypeptide reads, in one-letter code: tRNA-2-methylthio-N(6)-dimethylallyladenosine synthase (513 aa).

Positions 67-185 (KTFLIKTYGC…LPEILEEAYL (119 aa)) constitute an MTTase N-terminal domain. The [4Fe-4S] cluster site is built by Cys76, Cys112, Cys146, Cys222, Cys226, and Cys229. Positions 208–438 (REGNIKAWVN…NKKVACYSER (231 aa)) constitute a Radical SAM core domain. The region spanning 441–504 (QQYEGQTVQV…QFSLNGTFIS (64 aa)) is the TRAM domain.

The protein belongs to the methylthiotransferase family. MiaB subfamily. In terms of assembly, monomer. [4Fe-4S] cluster serves as cofactor.

Its subcellular location is the cytoplasm. The catalysed reaction is N(6)-dimethylallyladenosine(37) in tRNA + (sulfur carrier)-SH + AH2 + 2 S-adenosyl-L-methionine = 2-methylsulfanyl-N(6)-dimethylallyladenosine(37) in tRNA + (sulfur carrier)-H + 5'-deoxyadenosine + L-methionine + A + S-adenosyl-L-homocysteine + 2 H(+). Its function is as follows. Catalyzes the methylthiolation of N6-(dimethylallyl)adenosine (i(6)A), leading to the formation of 2-methylthio-N6-(dimethylallyl)adenosine (ms(2)i(6)A) at position 37 in tRNAs that read codons beginning with uridine. The sequence is that of tRNA-2-methylthio-N(6)-dimethylallyladenosine synthase from Staphylococcus saprophyticus subsp. saprophyticus (strain ATCC 15305 / DSM 20229 / NCIMB 8711 / NCTC 7292 / S-41).